The primary structure comprises 1273 residues: DNA-directed RNA polymerase subunit beta (1273 aa).

Belongs to the RNA polymerase beta chain family. The RNAP catalytic core consists of 2 alpha, 1 beta, 1 beta' and 1 omega subunit. When a sigma factor is associated with the core the holoenzyme is formed, which can initiate transcription.

The catalysed reaction is RNA(n) + a ribonucleoside 5'-triphosphate = RNA(n+1) + diphosphate. DNA-dependent RNA polymerase catalyzes the transcription of DNA into RNA using the four ribonucleoside triphosphates as substrates. The chain is DNA-directed RNA polymerase subunit beta from Phytoplasma mali (strain AT).